The following is a 142-amino-acid chain: HTH-type transcriptional regulator MntR (142 aa).

The HTH dtxR-type domain maps to 1–63; sequence MPTPSMEDYI…YEKYRGLVLT (63 aa). Asp-8, Glu-11, His-77, Glu-99, Glu-102, and His-103 together coordinate Mn(2+).

This sequence belongs to the DtxR/MntR family. Homodimer.

The protein localises to the cytoplasm. Its activity is regulated as follows. DNA binding is strongly activated by Mn(2+). Central regulator of manganese homeostasis. The sequence is that of HTH-type transcriptional regulator MntR from Bacillus cereus (strain AH820).